Here is a 336-residue protein sequence, read N- to C-terminus: NADH-quinone oxidoreductase subunit H (336 aa).

A run of 8 helical transmembrane segments spans residues 9–29, 77–97, 116–136, 156–176, 188–208, 236–256, 275–295, and 315–335; these read LVWI…LTYA, FLFA…VIPF, LGVM…IIAG, ISYE…TGSL, LPYW…VSIL, IPFA…SSIM, IVPG…CFLI, and VFLP…AFNI.

Belongs to the complex I subunit 1 family. NDH-1 is composed of 14 different subunits. Subunits NuoA, H, J, K, L, M, N constitute the membrane sector of the complex.

It is found in the cell inner membrane. It carries out the reaction a quinone + NADH + 5 H(+)(in) = a quinol + NAD(+) + 4 H(+)(out). Its function is as follows. NDH-1 shuttles electrons from NADH, via FMN and iron-sulfur (Fe-S) centers, to quinones in the respiratory chain. The immediate electron acceptor for the enzyme in this species is believed to be ubiquinone. Couples the redox reaction to proton translocation (for every two electrons transferred, four hydrogen ions are translocated across the cytoplasmic membrane), and thus conserves the redox energy in a proton gradient. This subunit may bind ubiquinone. The polypeptide is NADH-quinone oxidoreductase subunit H (Neorickettsia sennetsu (strain ATCC VR-367 / Miyayama) (Ehrlichia sennetsu)).